The sequence spans 99 residues: Imizoquin biosynthesis cluster protein A (99 aa).

It functions in the pathway secondary metabolite biosynthesis. Functionally, part of the gene cluster that mediates the biosynthesis of imizoquins A to D, tripeptide-derived alkaloids that serve a protective role against oxidative stress that are essential for normal germination. ImqB is a canonical three-module NRPS that assembles the tripeptide backbone of the imizoquins via condensation of Trp, Tyr, and Leu-derived precursors. N-methylation by imqF and phenol oxidation by imqC, followed by cyclization via the FAD-dependent oxidase imqH carry out the three-step transformation of L-tyrosine into tetrahydroisoquinoline. Importantly, this sequence requires the presence of a free amine in the tyrosine moiety, indicating that isoquinoline formation occurs prior to peptide bond formation. The imidazolidin-4-one ring of imizoquins could form following additional oxidation of the methyl-derived bridgehead carbon by imqH. Lastly, O-methylation by imqG and leucine hydroxylation by imqE complete biosynthesis of the imizoquins. The polypeptide is Imizoquin biosynthesis cluster protein A (Aspergillus flavus (strain ATCC 200026 / FGSC A1120 / IAM 13836 / NRRL 3357 / JCM 12722 / SRRC 167)).